The primary structure comprises 1107 residues: MQTLETTSKSNPGEVKAQKPSTRRTKVGKACDSCRRRKIKCNGLKPCPSCTIYGCECTYTDAKSTKNLKSNDAGKSKPTGRVSKNKETTRVDKDIRKLEQQYVPINANIHVGPRFPSENILNGYPQCGAPQNNVVGNPLAVNTQCHRGLSETPMSSTFKESNLRDDRLLQSSDTDDMRNGDSEERDLKGSDSENVKSKDNKSDPLIIYKDDTHIESTVNKLTQAVNELKSLQNAPSSIKSSIDAIELQLRNILDNWKPEVDFEKAKINESATTKSLETNLLRNKYTNHVHLTRFRIWIDYKNANKNNHFMGECGFSLAESFFASNQPLVDELFGLYSQVEAFSLQGLGYCVHLYEPYMKTEEAIKLMKETLYIILRFIDICVHHINEESISIANPLETYLRKKHLMPMTPTPRSSYGSPQSASTKSLVSKIIERIPQPFIESVTNVSSLQLLDLRDDESKMFGTLLNMCKSIRRKFDSVMSDYDSIVTEKSEGEQNDGKVTVAEFTSLCEAEEMLLALCYNYYNLTLYSFFEFGTNIEYMEHLLLLLEEQLALDEYYGFEKVLNVAVANAKKMGFHRWEFYVGYEESTAEKRRLLWWKLYNYEKASTMKKGFFSVIDDATVNCLLPKIFRNFGYLDRVEFLENIQKPMDLSVFSDVPISVLCKYGELALTIVTSEFHEKFLYADRYTSIRNSAKPPTLKNQLIKEIVDGIAYTETSYEAIRKQTAKLWDIALGKVTKDKINKEDTAAASKFTLSYEYHRFRLINMADNLIARLMVKPKSDWLISVMKGHLNRLYEHWKVMNEIILSMDNDYSIATTFEYYAPSCLCLATQTFLIVRNMEMDDVKMMVAVYKRFLNLGMFLQSAKVCSLADSHTFRDFSRSFSFITIISRLMIIEFMQIKELTKVEFIEKFSEVCPDLADLPPMLLDPNSCLYFSLLQQIKKSGFTLSFKKILEDARMMDFNYDRNLDSEAIKKCNGEFSKSMPSCTNVSDTTTAVSDNSAKKKASMGSARVNSTDTLTASPLSGLRNQTQLDSKDSVPSLEAYTPIDSVSDVPTGEINVPFPPVYNQNGLDQQTTYNLGTLDEFVNKGDLNELYNSLWGDLFSDVYL.

Residues 1–11 (MQTLETTSKSN) show a composition bias toward polar residues. Residues 1–27 (MQTLETTSKSNPGEVKAQKPSTRRTKV) are disordered. The tract at residues 1–296 (MQTLETTSKS…NHVHLTRFRI (296 aa)) is DNA-binding domain (DBD). A DNA-binding region (zn(2)-C6 fungal-type) is located at residues 31 to 57 (CDSCRRRKIKCNGLKPCPSCTIYGCEC). Disordered regions lie at residues 66 to 89 (KNLK…KETT) and 149 to 204 (LSET…KSDP). Over residues 175–204 (DDMRNGDSEERDLKGSDSENVKSKDNKSDP) the composition is skewed to basic and acidic residues. An inhibitory domain (ID) region spans residues 323 to 476 (ASNQPLVDEL…NMCKSIRRKF (154 aa)). The middle homology region (MHR) stretch occupies residues 542-616 (HLLLLLEEQL…TMKKGFFSVI (75 aa)). Residues 968–1107 (SEAIKKCNGE…WGDLFSDVYL (140 aa)) are activation domain (AD). The tract at residues 999 to 1022 (SAKKKASMGSARVNSTDTLTASPL) is disordered. Over residues 1010–1022 (RVNSTDTLTASPL) the composition is skewed to polar residues. A 9aaTAD motif is present at residues 1091 to 1099 (NELYNSLWG).

As to quaternary structure, interacts (via the activation domain AD) with the mediator subunit GAL11A (via the KIX domain).

It localises to the nucleus. Functionally, master transcriptional regulator of a pleiotropic drug resistance network that contributes to the azole resistance of clinical isolates and petite mutants. Regulates the efflux of rhodamine 6G. Regulates both constitutive and drug-induced expression of the pleiotropic ABC efflux transporter CDR1. Commonly regulated genes include also those encoding ABC transporters PDH1, SNQ2, and YOR1, a phospholipid biosynthetic enzyme (PDR16), seven-transmembrane (TM) domain-containing proteins (RTA1 and RSB1), an oxidoreductase (YMR102c-like), a sphingolipid biosynthetic enzyme (IPT1), and a transcription factor (RPN4). Second, along with this common core of regulated genes, interesting unique genes including genes encoding an ABC transporter likely localized to the vacuolar membrane (YBT1), proteins involved in DNA repair (REV1 and MEC3), the mitochondrially targeted proteins YIM1 and PUP1, 3 oxidoreductases (OYE2, YIR036c-like, and YNL134c-like proteins), a major facilitator superfamily member (QDR2), a carbonic anhydrase (NCE103), an alcohol acetyltransferase (ATF2), and a transcription factor (HAPI). Activates transcription of target genes in response to direct binding to specific xenobiotics by a discrete transferable ligand-binding domain. Stimulates gene expression of target genes via binding to 5'-TCCGYGGA-3' elements called pleiotropic drug response elements (PDREs). PDR1 is recruited to the target promoters by mediator subunit GAL11A via its interaction with the KIX domain of GAL11A. Modulates the interaction with host cells in ways that may contribute to increased virulence. Regulates specific cell wall adhesins and in particular EPA1, explaining the increase in adherence to epithelial cells in gain-of-function mutants. The sequence is that of Transcription factor PDR1 from Candida glabrata (strain ATCC 2001 / BCRC 20586 / JCM 3761 / NBRC 0622 / NRRL Y-65 / CBS 138) (Yeast).